A 198-amino-acid polypeptide reads, in one-letter code: Glycerol-3-phosphate acyltransferase (198 aa).

The next 5 helical transmembrane spans lie at 6 to 26, 55 to 75, 83 to 103, 113 to 133, and 154 to 174; these read FLPVALIIGYLFGSIPFGLIL, GLAAGTLLGDALKGTAAVIIS, AAMIAGLGAFLGHLFPVWLKF, IGILIGLFWPGAIFFCLVWLA, and IVLWAFGHTALAALFALLTLL.

Belongs to the PlsY family. In terms of assembly, probably interacts with PlsX.

The protein resides in the cell inner membrane. The enzyme catalyses an acyl phosphate + sn-glycerol 3-phosphate = a 1-acyl-sn-glycero-3-phosphate + phosphate. Its pathway is lipid metabolism; phospholipid metabolism. Its function is as follows. Catalyzes the transfer of an acyl group from acyl-phosphate (acyl-PO(4)) to glycerol-3-phosphate (G3P) to form lysophosphatidic acid (LPA). This enzyme utilizes acyl-phosphate as fatty acyl donor, but not acyl-CoA or acyl-ACP. The protein is Glycerol-3-phosphate acyltransferase of Bradyrhizobium sp. (strain BTAi1 / ATCC BAA-1182).